The sequence spans 291 residues: tRNA dimethylallyltransferase (291 aa).

Gly5 to Ser12 contacts ATP. Thr7 to Ser12 contributes to the substrate binding site. Positions Asp30–Gln33 are interaction with substrate tRNA.

Belongs to the IPP transferase family. As to quaternary structure, monomer. Requires Mg(2+) as cofactor.

It catalyses the reaction adenosine(37) in tRNA + dimethylallyl diphosphate = N(6)-dimethylallyladenosine(37) in tRNA + diphosphate. Its function is as follows. Catalyzes the transfer of a dimethylallyl group onto the adenine at position 37 in tRNAs that read codons beginning with uridine, leading to the formation of N6-(dimethylallyl)adenosine (i(6)A). The chain is tRNA dimethylallyltransferase from Frankia casuarinae (strain DSM 45818 / CECT 9043 / HFP020203 / CcI3).